Here is a 248-residue protein sequence, read N- to C-terminus: Aspartate/glutamate leucyltransferase (248 aa).

Belongs to the R-transferase family. Bpt subfamily.

It localises to the cytoplasm. It catalyses the reaction N-terminal L-glutamyl-[protein] + L-leucyl-tRNA(Leu) = N-terminal L-leucyl-L-glutamyl-[protein] + tRNA(Leu) + H(+). It carries out the reaction N-terminal L-aspartyl-[protein] + L-leucyl-tRNA(Leu) = N-terminal L-leucyl-L-aspartyl-[protein] + tRNA(Leu) + H(+). Its function is as follows. Functions in the N-end rule pathway of protein degradation where it conjugates Leu from its aminoacyl-tRNA to the N-termini of proteins containing an N-terminal aspartate or glutamate. This Methylobacillus flagellatus (strain ATCC 51484 / DSM 6875 / VKM B-1610 / KT) protein is Aspartate/glutamate leucyltransferase.